The primary structure comprises 1060 residues: Carbamoyl phosphate synthase large chain (1060 aa).

The segment at 1–401 is carboxyphosphate synthetic domain; the sequence is MPKRQDIHKI…SLLKAVRSLE (401 aa). Arg-129, Arg-169, Gly-175, Gly-176, Arg-208, Ile-210, Glu-215, Gly-241, Val-242, His-243, Gln-284, and Glu-298 together coordinate ATP. The region spanning 133-327 is the ATP-grasp 1 domain; that stretch reads KNLMQKLHEP…IAKMAAKIAV (195 aa). Mg(2+)-binding residues include Gln-284, Glu-298, and Asn-300. Mn(2+)-binding residues include Gln-284, Glu-298, and Asn-300. Residues 402–546 form an oligomerization domain region; the sequence is VGLIHPERPA…YSTYESSTES (145 aa). A carbamoyl phosphate synthetic domain region spans residues 547–929; it reads VKSDKPSVLV…ALYKAFEAAG (383 aa). One can recognise an ATP-grasp 2 domain in the interval 671 to 861; that stretch reads DQVIKSLKLP…LAQVATLAIL (191 aa). Arg-707, His-746, Leu-748, Glu-752, Gly-777, Ile-778, His-779, Ser-780, Gln-820, and Glu-832 together coordinate ATP. Positions 820, 832, and 834 each coordinate Mg(2+). Mn(2+)-binding residues include Gln-820, Glu-832, and Asn-834. The 131-residue stretch at 930–1060 folds into the MGS-like domain; that stretch reads MHLPQFGRAL…QAFSISPIKS (131 aa). The tract at residues 930–1060 is allosteric domain; sequence MHLPQFGRAL…QAFSISPIKS (131 aa).

The protein belongs to the CarB family. Composed of two chains; the small (or glutamine) chain promotes the hydrolysis of glutamine to ammonia, which is used by the large (or ammonia) chain to synthesize carbamoyl phosphate. Tetramer of heterodimers (alpha,beta)4. It depends on Mg(2+) as a cofactor. Mn(2+) serves as cofactor.

The enzyme catalyses hydrogencarbonate + L-glutamine + 2 ATP + H2O = carbamoyl phosphate + L-glutamate + 2 ADP + phosphate + 2 H(+). It catalyses the reaction hydrogencarbonate + NH4(+) + 2 ATP = carbamoyl phosphate + 2 ADP + phosphate + 2 H(+). It functions in the pathway amino-acid biosynthesis; L-arginine biosynthesis; carbamoyl phosphate from bicarbonate: step 1/1. Its pathway is pyrimidine metabolism; UMP biosynthesis via de novo pathway; (S)-dihydroorotate from bicarbonate: step 1/3. Large subunit of the glutamine-dependent carbamoyl phosphate synthetase (CPSase). CPSase catalyzes the formation of carbamoyl phosphate from the ammonia moiety of glutamine, carbonate, and phosphate donated by ATP, constituting the first step of 2 biosynthetic pathways, one leading to arginine and/or urea and the other to pyrimidine nucleotides. The large subunit (synthetase) binds the substrates ammonia (free or transferred from glutamine from the small subunit), hydrogencarbonate and ATP and carries out an ATP-coupled ligase reaction, activating hydrogencarbonate by forming carboxy phosphate which reacts with ammonia to form carbamoyl phosphate. This Lacticaseibacillus paracasei (strain ATCC 334 / BCRC 17002 / CCUG 31169 / CIP 107868 / KCTC 3260 / NRRL B-441) (Lactobacillus paracasei) protein is Carbamoyl phosphate synthase large chain.